Consider the following 660-residue polypeptide: GTP-binding protein BRASSINAZOLE INSENSITIVE PALE GREEN 2, chloroplastic (660 aa).

The N-terminal 53 residues, 1 to 53 (MVVLISSTVTICNVKPKLEDGNFRVSRLIHRPEVPFFSGLSNEKKKKCAVSVM), are a transit peptide targeting the chloroplast. Disordered regions lie at residues 127–158 (EGDE…DDEM) and 191–212 (NDVE…TEEK). A compositionally biased stretch (acidic residues) spans 130–158 (EHVENDELAGFEMVDDDADEEEEGEDDEM). The CP-type G domain occupies 273–457 (STRLIKPMSN…MYDTPGLLHP (185 aa)).

The protein belongs to the TRAFAC class YlqF/YawG GTPase family. Binds to chloroplast 16S and 23S ribosomal RNAs. Mostly expressed in stems, petioles, leaves and flowers and, at low levels, also in roots.

The protein resides in the plastid. Its subcellular location is the chloroplast stroma. Functionally, required for brassinosteroid- (BR) mediated post-transcriptional and translational regulation in the chloroplast, including accumulation of chloroplast rRNA. Involved in chloroplast differentiation. This chain is GTP-binding protein BRASSINAZOLE INSENSITIVE PALE GREEN 2, chloroplastic, found in Arabidopsis thaliana (Mouse-ear cress).